The primary structure comprises 296 residues: uncharacterized protein (296 aa).

The first 20 residues, methionine 1–alanine 20, serve as a signal peptide directing secretion.

This is an uncharacterized protein from Aquifex aeolicus (strain VF5).